A 178-amino-acid polypeptide reads, in one-letter code: Plasmid transfer protein TraF (178 aa).

A signal peptide spans 1 to 30; the sequence is MSRILKRIAAGVVIAGVAALLLAAGGYAAG.

The protein belongs to the peptidase S26C family.

Its subcellular location is the periplasm. In terms of biological role, required for donor-specific phage sensitivity. May be involved in pilus assembly. The polypeptide is Plasmid transfer protein TraF (traF) (Escherichia coli).